A 382-amino-acid polypeptide reads, in one-letter code: MRYLTAGESHGPQLTAIIEGLPSQLPLGTSDINPWLRKRQGGYGRGRRMVIETDEAQILSGVRAGRTTGAPVTLVIANKDHRNWTEIMSPEPGGEPRKKALTAARPGHADLTGGIKYRHKDLRDVLERASARETAARVAVGAVALKLLSELGVEGANYVASLGGIETRAPFSWDQLDAIEASDLRTPDADAAAQMRERIDQAKKDGDTLGGILEVRFRGLPVGLGSYVHWDRKLDGRIAQACLSVQAMKGVEIGRAFENAVQPGSRVHDAVYYREGTYVRDTNSAGGLEAGMTNGEELIVRVAMKPIATLMKPLPTVNVVTHEAADAARERSDTTAVPAAGVILQCVIGWVLAEAMLEKFGGDTLPELQERVQAARAYAQAY.

NADP(+)-binding residues include arginine 39 and arginine 45. Residues 128-130 (RAS), 246-247 (QA), alanine 290, 305-309 (KPIAT), and arginine 331 each bind FMN.

It belongs to the chorismate synthase family. In terms of assembly, homotetramer. FMNH2 is required as a cofactor.

The enzyme catalyses 5-O-(1-carboxyvinyl)-3-phosphoshikimate = chorismate + phosphate. It functions in the pathway metabolic intermediate biosynthesis; chorismate biosynthesis; chorismate from D-erythrose 4-phosphate and phosphoenolpyruvate: step 7/7. Catalyzes the anti-1,4-elimination of the C-3 phosphate and the C-6 proR hydrogen from 5-enolpyruvylshikimate-3-phosphate (EPSP) to yield chorismate, which is the branch point compound that serves as the starting substrate for the three terminal pathways of aromatic amino acid biosynthesis. This reaction introduces a second double bond into the aromatic ring system. This Deinococcus geothermalis (strain DSM 11300 / CIP 105573 / AG-3a) protein is Chorismate synthase.